The primary structure comprises 461 residues: UPF0210 protein LCABL_10110 (461 aa).

It belongs to the UPF0210 family. As to quaternary structure, homodimer.

This Lacticaseibacillus casei (strain BL23) (Lactobacillus casei) protein is UPF0210 protein LCABL_10110.